The primary structure comprises 754 residues: Nibrin (754 aa).

An FHA domain is found at 24-83; that stretch reads YVVGRKNCAILIEKDQSISRNHAVLTANFSVTNLSQTDEIPVLALKDNSKYGTFVNEEKM. BRCT domains follow at residues 105–181 and 224–315; these read KFRI…TEFL and GKTF…LAVI. The tract at residues 111-328 is mediates interaction with SP100; sequence EPLVACSSCL…TKNYCDPQGH (218 aa). The tract at residues 221 to 402 is interaction with MTOR, MAPKAP1 and RICTOR; the sequence is IFKGKTFIFL…FRMLSQDAPT (182 aa). Ser278 is modified (phosphoserine; by ATM). Positions 326–346 are disordered; it reads QGHPSTGLKTTTPGPSLSQGL. A compositionally biased stretch (polar residues) spans 328 to 346; it reads HPSTGLKTTTPGPSLSQGL. Thr337 bears the Phosphothreonine mark. Ser343 carries the phosphoserine; by ATM modification. A Phosphoserine modification is found at Ser347. Lys388 carries the post-translational modification N6-lactoyllysine. Disordered regions lie at residues 396-415 and 431-475; these read LSQD…NNNS and LSPT…NQEM. Ser397 is subject to Phosphoserine. Thr402 is subject to Phosphothreonine. Polar residues-rich tracts occupy residues 431-440 and 447-462; these read LSPTKLPSIN and SQQQ…FQPS. Phosphoserine is present on Ser432. A Glycyl lysine isopeptide (Lys-Gly) (interchain with G-Cter in ubiquitin) cross-link involves residue Lys435. Residues 461–467 carry the Nuclear localization signal motif; it reads PSTKKRE. Phosphoserine occurs at positions 509 and 518. Residues Lys571 and Lys582 each participate in a glycyl lysine isopeptide (Lys-Gly) (interchain with G-Cter in SUMO2) cross-link. A phosphoserine mark is found at Ser615 and Ser673. Glycyl lysine isopeptide (Lys-Gly) (interchain with G-Cter in ubiquitin) cross-links involve residues Lys686, Lys690, and Lys735. The short motif at 740–749 is the FxF/Y motif element; the sequence is ADDLFRYNPY.

This sequence belongs to the Nibrin family. In terms of assembly, component of the MRN complex composed of two heterodimers RAD50 and MRE11 associated with a single NBN. The MRN complexes dimerize on DNA to form joined MRN-MRN oligomers required for DNA double-strand break repair. The MRN complexes dimerize on DNA to form joined MRN-MRN oligomers required for DNA double-strand break repair. As part of the MRN complex, interacts with MCM9; the interaction recruits the complex to DNA repair sites. Component of the BASC complex, at least composed of BRCA1, MSH2, MSH6, MLH1, ATM, BLM, RAD50, MRE11 and NBN. Interacts with histone H2AX; this requires phosphorylation of H2AX on 'Ser-139' and promotes NBN recruitment to DNA damage sites. Interacts with (phosphorylated) MDC1; promoting NBN recruitment to DNA damage sites. Interacts with (phosphorylated) RAD17; promoting NBN recruitment to DNA damage sites. Interacts (via FxF/Y motif) with ATM. Interacts with HJURP. Interacts with INTS3. Interacts with KPNA2. Interacts with TERF2; interaction is disrupted upon NBN phosphorylation by CDK2. Interacts with (phosphorylated) RBBP8/CtIP; the interaction links the role of the MRN complex in DNA double-strand break sensing to resection. Interacts with SP100; recruits NBN to PML bodies. Interacts with ATF2. Interacts with MTOR, MAPKAP1 isoform 2 and RICTOR; indicative for an association with the mTORC2 complex. Interacts with MRNIP. Interacts with UFL1; promoting UFL1 recruitment to double-strand breaks following DNA damage. Interacts with CYREN (via XLF motif). Post-translationally, phosphorylated by ATM in response of ionizing radiation, and such phosphorylation is responsible intra-S phase checkpoint control and telomere maintenance. Phosphorylated at Ser-432 by CDK2 in S/G2 phases abolishes interaction with TERF2, enabling DCLRE1B/Apollo recruitment to telomeres. Phosphorylation at Ser-432 in response to dysfunctional telomeres promotes non-homologous end joining repair at telomeres, while dephosphorylation by PPP1CA promotes microhomology-mediated end-joining (MMEJ) repair. In terms of processing, ubiquitinated at Lys-435 via 'Lys-6'-linked ubiquitin chains by RNF8, promoting NBN recruitment to DNA double-strand breaks (DSBs). Ubiquitinated at Lys-686 and Lys-689 via 'Lys-63'-linked ubiquitin chains by PELI1: ubiquitination takes place following PELI1 phosphorylation and promotes ATM activation and DNA repair. Ubiquitinated at Lys-735 via 'Lys-63'-linked ubiquitin chains by the SCF(SKP2) complex: ubiquitination takes place following SKP2 phosphorylation and promotes ATM activation and DNA repair. Lactylation at Lys-388 by KAT5 in response to DNA damage promotes recruitment of the MRN complex to DNA damage sites. Delactylated by HDAC3.

The protein localises to the nucleus. The protein resides in the chromosome. It is found in the PML body. It localises to the telomere. Component of the MRN complex, which plays a central role in double-strand break (DSB) repair, DNA recombination, maintenance of telomere integrity and meiosis. The MRN complex is involved in the repair of DNA double-strand breaks (DSBs) via homologous recombination (HR), an error-free mechanism which primarily occurs during S and G2 phases. The complex (1) mediates the end resection of damaged DNA, which generates proper single-stranded DNA, a key initial steps in HR, and is (2) required for the recruitment of other repair factors and efficient activation of ATM and ATR upon DNA damage. The MRN complex possesses single-strand endonuclease activity and double-strand-specific 3'-5' exonuclease activity, which are provided by MRE11, to initiate end resection, which is required for single-strand invasion and recombination. Within the MRN complex, NBN acts as a protein-protein adapter, which specifically recognizes and binds phosphorylated proteins, promoting their recruitment to DNA damage sites. Recruits MRE11 and RAD50 components of the MRN complex to DSBs in response to DNA damage. Promotes the recruitment of PI3/PI4-kinase family members ATM, ATR, and probably DNA-PKcs to the DNA damage sites, activating their functions. Mediates the recruitment of phosphorylated RBBP8/CtIP to DSBs, leading to cooperation between the MRN complex and RBBP8/CtIP to initiate end resection. RBBP8/CtIP specifically promotes the endonuclease activity of the MRN complex to clear DNA ends containing protein adducts. The MRN complex is also required for the processing of R-loops. NBN also functions in telomere length maintenance via its interaction with TERF2: interaction with TERF2 during G1 phase preventing recruitment of DCLRE1B/Apollo to telomeres. NBN also promotes DNA repair choice at dysfunctional telomeres: NBN phosphorylation by CK2 promotes non-homologous end joining repair at telomeres, while unphosphorylated NBN promotes microhomology-mediated end-joining (MMEJ) repair. Enhances AKT1 phosphorylation possibly by association with the mTORC2 complex. In Pongo abelii (Sumatran orangutan), this protein is Nibrin (NBN).